Consider the following 144-residue polypeptide: Maximins 3/H5 (144 aa).

An N-terminal signal peptide occupies residues 1-18; the sequence is MNFKYIFAVSFLIASAYA. Propeptides lie at residues 19 to 43 and 74 to 123; these read RSVQ…REIR and TAEE…KEKR. The residue at position 143 (Leu-143) is a Leucine amide.

It belongs to the bombinin family. As to expression, expressed by the skin glands.

The protein localises to the secreted. Functionally, maximin-3 shows antibacterial activity against both Gram-positive and Gram-negative bacteria. It also shows antimicrobial activity against the fungus C.albicans, but not against A.flavus nor P.uticale. It has little hemolytic activity. It possess a significant cytotoxicity against tumor cell lines. It possess a significant anti-HIV activity. It shows high spermicidal activity. In terms of biological role, maximin-H5 shows antibacterial activity only against the Gram-positive bacteria S.aureus. The other bacterial and fungal strains tested were resistant to it. The presence of metal ions, like Zn(2+) and Mg(2+), did not increase its antimicrobial potency. Does not show hemolytic activity (in a concentration up to 80 uM). This Bombina maxima (Giant fire-bellied toad) protein is Maximins 3/H5.